The sequence spans 181 residues: uncharacterized protein (181 aa).

An N-terminal signal peptide occupies residues 1–23; that stretch reads MKKCLLFLTTIALILSLSTNAFA.

This is an uncharacterized protein from Bacillus subtilis (strain 168).